The chain runs to 628 residues: ATP-dependent zinc metalloprotease FtsH (628 aa).

Over methionine 1 to threonine 7 the chain is Stromal. Residues leucine 8–glycine 28 traverse the membrane as a helical segment. Residues proline 29–valine 118 are Lumenal-facing. A helical membrane pass occupies residues tryptophan 119–phenylalanine 139. Residues arginine 140–phenylalanine 628 lie on the Stromal side of the membrane. Glycine 213–threonine 220 serves as a coordination point for ATP. Histidine 434 serves as a coordination point for Zn(2+). Residue glutamate 435 is part of the active site. The Zn(2+) site is built by histidine 438 and aspartate 512.

This sequence in the central section; belongs to the AAA ATPase family. The protein in the C-terminal section; belongs to the peptidase M41 family. In terms of assembly, homohexamer. Zn(2+) serves as cofactor.

The protein resides in the plastid. It is found in the chloroplast thylakoid membrane. Functionally, acts as a processive, ATP-dependent zinc metallopeptidase. The protein is ATP-dependent zinc metalloprotease FtsH of Pyropia yezoensis (Susabi-nori).